The chain runs to 227 residues: MAYPVQLGFQDAASPIMEELLYFHDHTLMIMFLISSLVLYIISLMLTTELMHTNTMDAQEVETVWTILPAAILILIALPSLRILYMMDEITTPSLTLKTMGHQWYWSYEYTDYENLCFDSYMVPSSDLKPGELRLLEVDNRIVLPTELSIRMLISSEDVLHSWAVPSLGVKTDAIPGRLNQATLMASRPGIYYGQCSEICGANHSFMPIVLELVPLKHFEEWLLSML.

At 1 to 14 the chain is on the mitochondrial intermembrane side; it reads MAYPVQLGFQDAAS. Residues 15–45 form a helical membrane-spanning segment; the sequence is PIMEELLYFHDHTLMIMFLISSLVLYIISLM. Over 46–59 the chain is Mitochondrial matrix; sequence LTTELMHTNTMDAQ. A helical membrane pass occupies residues 60-87; the sequence is EVETVWTILPAAILILIALPSLRILYMM. Residues 88-227 are Mitochondrial intermembrane-facing; sequence DEITTPSLTL…HFEEWLLSML (140 aa). Residues H161, C196, E198, C200, H204, and M207 each contribute to the Cu cation site. Mg(2+) is bound at residue E198.

This sequence belongs to the cytochrome c oxidase subunit 2 family. Component of the cytochrome c oxidase (complex IV, CIV), a multisubunit enzyme composed of 14 subunits. The complex is composed of a catalytic core of 3 subunits MT-CO1, MT-CO2 and MT-CO3, encoded in the mitochondrial DNA, and 11 supernumerary subunits COX4I, COX5A, COX5B, COX6A, COX6B, COX6C, COX7A, COX7B, COX7C, COX8 and NDUFA4, which are encoded in the nuclear genome. The complex exists as a monomer or a dimer and forms supercomplexes (SCs) in the inner mitochondrial membrane with NADH-ubiquinone oxidoreductase (complex I, CI) and ubiquinol-cytochrome c oxidoreductase (cytochrome b-c1 complex, complex III, CIII), resulting in different assemblies (supercomplex SCI(1)III(2)IV(1) and megacomplex MCI(2)III(2)IV(2)). Found in a complex with TMEM177, COA6, COX18, COX20, SCO1 and SCO2. Interacts with TMEM177 in a COX20-dependent manner. Interacts with COX20. Interacts with COX16. Cu cation is required as a cofactor.

Its subcellular location is the mitochondrion inner membrane. The catalysed reaction is 4 Fe(II)-[cytochrome c] + O2 + 8 H(+)(in) = 4 Fe(III)-[cytochrome c] + 2 H2O + 4 H(+)(out). Component of the cytochrome c oxidase, the last enzyme in the mitochondrial electron transport chain which drives oxidative phosphorylation. The respiratory chain contains 3 multisubunit complexes succinate dehydrogenase (complex II, CII), ubiquinol-cytochrome c oxidoreductase (cytochrome b-c1 complex, complex III, CIII) and cytochrome c oxidase (complex IV, CIV), that cooperate to transfer electrons derived from NADH and succinate to molecular oxygen, creating an electrochemical gradient over the inner membrane that drives transmembrane transport and the ATP synthase. Cytochrome c oxidase is the component of the respiratory chain that catalyzes the reduction of oxygen to water. Electrons originating from reduced cytochrome c in the intermembrane space (IMS) are transferred via the dinuclear copper A center (CU(A)) of subunit 2 and heme A of subunit 1 to the active site in subunit 1, a binuclear center (BNC) formed by heme A3 and copper B (CU(B)). The BNC reduces molecular oxygen to 2 water molecules using 4 electrons from cytochrome c in the IMS and 4 protons from the mitochondrial matrix. The protein is Cytochrome c oxidase subunit 2 (MT-CO2) of Hapalemur griseus (Gray gentle lemur).